The following is a 243-amino-acid chain: Uridylate kinase (243 aa).

Residue 18-21 (KLGG) coordinates ATP. Position 59 (G59) interacts with UMP. 2 residues coordinate ATP: G60 and R64. UMP-binding positions include D79 and 140 to 147 (MGMPYFST). ATP contacts are provided by Y173 and D176.

The protein belongs to the UMP kinase family. Homohexamer.

The protein localises to the cytoplasm. It carries out the reaction UMP + ATP = UDP + ADP. The protein operates within pyrimidine metabolism; CTP biosynthesis via de novo pathway; UDP from UMP (UMPK route): step 1/1. Its activity is regulated as follows. Inhibited by UTP. In terms of biological role, catalyzes the reversible phosphorylation of UMP to UDP. In Corynebacterium efficiens (strain DSM 44549 / YS-314 / AJ 12310 / JCM 11189 / NBRC 100395), this protein is Uridylate kinase.